The following is a 341-amino-acid chain: MAP3K12-binding inhibitory protein 1 (341 aa).

Residue serine 91 is modified to Phosphoserine. Residues lysine 94, lysine 127, lysine 137, lysine 151, and lysine 233 each participate in a glycyl lysine isopeptide (Lys-Gly) (interchain with G-Cter in SUMO2) cross-link. An interaction with MAP3K12 region spans residues 170–341 (AEINENNVRE…EADSMAAHLP (172 aa)). The tract at residues 269-283 (IYQRIKKLEDKILEL) is leucine-zipper 1. At lysine 299 the chain carries N6-acetyllysine; alternate. Lysine 299 is covalently cross-linked (Glycyl lysine isopeptide (Lys-Gly) (interchain with G-Cter in SUMO2); alternate). Glycyl lysine isopeptide (Lys-Gly) (interchain with G-Cter in SUMO2) cross-links involve residues lysine 302 and lysine 323. The tract at residues 312 to 327 (LAELDEKISALKRALL) is leucine-zipper 2.

As to quaternary structure, component of the ADA2A-containing complex (ATAC), composed of KAT14, KAT2A, TADA2L, TADA3L, ZZ3, MBIP, WDR5, YEATS2, CCDC101 and DR1. In the complex, it probably interacts directly with KAT2A, KAT14 and WDR5.

It is found in the nucleus. Its subcellular location is the cytoplasm. Inhibits the MAP3K12 activity to induce the activation of the JNK/SAPK pathway. Component of the ATAC complex, a complex with histone acetyltransferase activity on histones H3 and H4. This chain is MAP3K12-binding inhibitory protein 1 (Mbip), found in Mus musculus (Mouse).